Reading from the N-terminus, the 121-residue chain is UPF0738 protein BPUM_1088 (121 aa).

This sequence belongs to the UPF0738 family.

This Bacillus pumilus (strain SAFR-032) protein is UPF0738 protein BPUM_1088.